A 240-amino-acid chain; its full sequence is Large ribosomal subunit protein uL2 (240 aa).

The span at 1 to 11 shows a compositional bias: polar residues; sequence MGKRLISQNRG. Disordered stretches follow at residues 1 to 26 and 206 to 240; these read MGKR…KRKG and GGGR…TGRK. Basic residues-rich tracts occupy residues 13 to 26 and 228 to 240; these read GTPK…KRKG and KVGH…TGRK.

Belongs to the universal ribosomal protein uL2 family. Part of the 50S ribosomal subunit. Forms a bridge to the 30S subunit in the 70S ribosome.

In terms of biological role, one of the primary rRNA binding proteins. Required for association of the 30S and 50S subunits to form the 70S ribosome, for tRNA binding and peptide bond formation. It has been suggested to have peptidyltransferase activity; this is somewhat controversial. Makes several contacts with the 16S rRNA in the 70S ribosome. This Methanococcus vannielii (strain ATCC 35089 / DSM 1224 / JCM 13029 / OCM 148 / SB) protein is Large ribosomal subunit protein uL2.